The following is a 409-amino-acid chain: Broad specificity amino-acid racemase (409 aa).

The N-terminal stretch at 1 to 23 (MPFSRTLLALSLGMALLQNPAFA) is a signal peptide. An intrachain disulfide couples Cys70 to Cys96. Residue Lys74 is the Proton acceptor of the active site. Lys74 is modified (N6-(pyridoxal phosphate)lysine). Arg173 is a substrate binding site. Tyr300 functions as the Proton acceptor in the catalytic mechanism. Residue Met348 coordinates substrate.

It belongs to the alanine racemase family. Bsr subfamily. Homodimer. The cofactor is pyridoxal 5'-phosphate.

The protein localises to the periplasm. It catalyses the reaction an L-alpha-amino acid = a D-alpha-amino acid. The catalysed reaction is L-lysine = D-lysine. It carries out the reaction L-arginine = D-arginine. The enzyme catalyses L-ornithine = D-ornithine. It catalyses the reaction L-alanine = D-alanine. The catalysed reaction is L-methionine = D-methionine. Amino-acid racemase able to utilize a broad range of substrates. Is mostly active with lysine and arginine and, to a lesser extent, with ornithine, whereas is about 10 times less active with alanine, methionine and ethionine. With phenylalanine as substrate only a trace activity is detectable, and is inactive with glutamate. Plays a key role in the catabolism of D-arginine and D-lysine, that allows P.taetrolens strain NBRC 3460 to grow on these basic D-amino acids as a sole carbon source. The protein is Broad specificity amino-acid racemase of Pseudomonas taetrolens.